The primary structure comprises 117 residues: MPRAKSSVVSRKRHKKILKLAKGYFGAKSKLFRVAKQQVMKSLMYAYRDRRARKREFRKLWITRINAAARMHGLTYSRMMNGLKKAGVEINRKMLADLAVNDKNAFAELVEIAKKNL.

The protein belongs to the bacterial ribosomal protein bL20 family.

Functionally, binds directly to 23S ribosomal RNA and is necessary for the in vitro assembly process of the 50S ribosomal subunit. It is not involved in the protein synthesizing functions of that subunit. This is Large ribosomal subunit protein bL20 from Carboxydothermus hydrogenoformans (strain ATCC BAA-161 / DSM 6008 / Z-2901).